Reading from the N-terminus, the 371-residue chain is Queuine tRNA-ribosyltransferase (371 aa).

D90 acts as the Proton acceptor in catalysis. Substrate contacts are provided by residues 90 to 94 (DSGGF), D144, Q189, and G215. The tract at residues 246 to 252 (GVGTPEN) is RNA binding. D265 serves as the catalytic Nucleophile. Residues 270–274 (TRNAR) are RNA binding; important for wobble base 34 recognition. Positions 303, 305, 308, and 334 each coordinate Zn(2+).

Belongs to the queuine tRNA-ribosyltransferase family. In terms of assembly, homodimer. Within each dimer, one monomer is responsible for RNA recognition and catalysis, while the other monomer binds to the replacement base PreQ1. It depends on Zn(2+) as a cofactor.

It carries out the reaction 7-aminomethyl-7-carbaguanine + guanosine(34) in tRNA = 7-aminomethyl-7-carbaguanosine(34) in tRNA + guanine. It functions in the pathway tRNA modification; tRNA-queuosine biosynthesis. Catalyzes the base-exchange of a guanine (G) residue with the queuine precursor 7-aminomethyl-7-deazaguanine (PreQ1) at position 34 (anticodon wobble position) in tRNAs with GU(N) anticodons (tRNA-Asp, -Asn, -His and -Tyr). Catalysis occurs through a double-displacement mechanism. The nucleophile active site attacks the C1' of nucleotide 34 to detach the guanine base from the RNA, forming a covalent enzyme-RNA intermediate. The proton acceptor active site deprotonates the incoming PreQ1, allowing a nucleophilic attack on the C1' of the ribose to form the product. After dissociation, two additional enzymatic reactions on the tRNA convert PreQ1 to queuine (Q), resulting in the hypermodified nucleoside queuosine (7-(((4,5-cis-dihydroxy-2-cyclopenten-1-yl)amino)methyl)-7-deazaguanosine). In Helicobacter pylori (strain J99 / ATCC 700824) (Campylobacter pylori J99), this protein is Queuine tRNA-ribosyltransferase.